Consider the following 233-residue polypeptide: Leucyl/phenylalanyl-tRNA--protein transferase (233 aa).

This sequence belongs to the L/F-transferase family.

It is found in the cytoplasm. It catalyses the reaction N-terminal L-lysyl-[protein] + L-leucyl-tRNA(Leu) = N-terminal L-leucyl-L-lysyl-[protein] + tRNA(Leu) + H(+). The catalysed reaction is N-terminal L-arginyl-[protein] + L-leucyl-tRNA(Leu) = N-terminal L-leucyl-L-arginyl-[protein] + tRNA(Leu) + H(+). The enzyme catalyses L-phenylalanyl-tRNA(Phe) + an N-terminal L-alpha-aminoacyl-[protein] = an N-terminal L-phenylalanyl-L-alpha-aminoacyl-[protein] + tRNA(Phe). Its function is as follows. Functions in the N-end rule pathway of protein degradation where it conjugates Leu, Phe and, less efficiently, Met from aminoacyl-tRNAs to the N-termini of proteins containing an N-terminal arginine or lysine. This is Leucyl/phenylalanyl-tRNA--protein transferase from Anaeromyxobacter dehalogenans (strain 2CP-1 / ATCC BAA-258).